The following is a 193-amino-acid chain: Cysteine and glycine-rich protein 2 (193 aa).

Residues 10–61 (CGACGRTVYHAEEVQCDGRTFHRCCFLCMVCRKNLDSTTVAIHDEEIYCKSC) form the LIM zinc-binding 1 domain. Positions 64-69 (KKYGPK) match the Nuclear localization signal motif. A Glycyl lysine isopeptide (Lys-Gly) (interchain with G-Cter in SUMO2) cross-link involves residue Lys-91. An N6-acetyllysine mark is found at Lys-112 and Lys-131. An LIM zinc-binding 2 domain is found at 119–170 (CSRCGDSVYAAEKIIGAGKPWHKNCFRCAKCGKSLESTTLTEKEGEIYCKGC). N6-acetyllysine; alternate is present on Lys-137. Lys-137 is subject to N6-succinyllysine; alternate. Lys-161 is modified (N6-acetyllysine).

In terms of assembly, interacts with KAT14. The LIM domain 1 is necessary and sufficient for this interaction. Interacts with GLRX3. As to expression, highly expressed in the aorta; weakly found in the kidney, thymus, and intestine. Barely detectable in brain, testis, esophagus, lung, liver, aortic adventitia, vena cava, or uterus; not present in heart and skeletal muscle.

It is found in the nucleus. In terms of biological role, drastically down-regulated in response to PDGF-BB or cell injury, that promote smooth muscle cell proliferation and dedifferentiation. Seems to play a role in the development of the embryonic vascular system. The protein is Cysteine and glycine-rich protein 2 (Csrp2) of Rattus norvegicus (Rat).